The chain runs to 244 residues: Cell adhesion molecule CEACAM4 (244 aa).

An N-terminal signal peptide occupies residues 1–35; sequence MGPPSAAPRGGHRPWQGLLITASLLTFWHPPTTVQ. The 104-residue stretch at 36 to 139 folds into the Ig-like V-type domain; sequence FTIEALPSSA…DSDQATGQLH (104 aa). Topologically, residues 36-155 are extracellular; sequence FTIEALPSSA…PGLPVGAVAG (120 aa). Asn57, Asn104, Asn111, and Asn126 each carry an N-linked (GlcNAc...) asparagine glycan. The chain crosses the membrane as a helical span at residues 156–176; sequence IVTGVLVGVALVAALVCFLLL. Residues 177–244 lie on the Cytoplasmic side of the membrane; it reads SRTGRASIQR…QIDHKADVVS (68 aa). A disordered region spans residues 186–215; that stretch reads RDLREQPPPASTPGHGPSHRSTFSAPLPSP. Residues 222-236 carry the ITAM motif; that stretch reads YEELLYSDANIYCQI.

It belongs to the immunoglobulin superfamily. CEA family. Interacts through its phosphorylated ITAM domain with the SH2 domain-containing cytoplasmic proteins involved in signaling processes during phagocytosis. In terms of processing, N-glycosylated. The cytoplasmic ITAM-like sequence becomes tyrosine phosphorylated by SRC family PTKs upon ligand-mediated receptor clustering and allows to initiate phagocytosis of bound ligand. Granulocytes.

It is found in the membrane. Its function is as follows. Granulocyte orphan receptor that acts as an trigger efficient phagocytosis of attached particles. The sequence is that of Cell adhesion molecule CEACAM4 from Homo sapiens (Human).